Consider the following 166-residue polypeptide: Ribosome maturation factor RimM (166 aa).

Residues 94–165 (EGEYYLGKLI…TIELKVLDLL (72 aa)) enclose the PRC barrel domain.

The protein belongs to the RimM family. As to quaternary structure, binds ribosomal protein uS19.

The protein resides in the cytoplasm. In terms of biological role, an accessory protein needed during the final step in the assembly of 30S ribosomal subunit, possibly for assembly of the head region. Essential for efficient processing of 16S rRNA. May be needed both before and after RbfA during the maturation of 16S rRNA. It has affinity for free ribosomal 30S subunits but not for 70S ribosomes. The protein is Ribosome maturation factor RimM of Borrelia garinii subsp. bavariensis (strain ATCC BAA-2496 / DSM 23469 / PBi) (Borreliella bavariensis).